The following is a 419-amino-acid chain: MHHQQSSYGGGYPGQAYRQQQPNNAYGYGQPSPQPYGSHHNGYNSPQQNYGPPSGGHMYQQQSAYQNSYNQGGHGIPARPPDQPVSFGQGAPQEYAYRYSACTGTRKALLIGINYFNQKGQLRGCINDVKNMSTYLHENFGYPRENMVLLTDDQQNPKSQPTKANILRAMHWLVKDAKPNDSLFFHYSGHGGQTPDLDGDEDDGYDEVIYPVDFRQAGHIVDDEMHRIMVNPLQPGVRLTAIFDSCHSGSALDLPYIYSTQGILKEPNLAKEAGQGLLGVVSAYARGDMGSMVSTAVGFFKKATKGDEVYERNKQTKTSGADVIMWSGSKDDQTSQDAQIQGQATGAMSWAFISALRKNPQQSYVQLLNSIRDELSTKYTQKPQLSCSHPLGDLIDVPVLGSGFIWFWVLSIFQCQATK.

Residues 1–89 are disordered; the sequence is MHHQQSSYGG…PPDQPVSFGQ (89 aa). Polar residues predominate over residues 41-51; the sequence is NGYNSPQQNYG. The segment covering 59 to 71 has biased composition (low complexity); that stretch reads YQQQSAYQNSYNQ. Active-site residues include histidine 190 and cysteine 246.

It belongs to the peptidase C14B family.

Its function is as follows. Involved in cell death (apoptosis). In Aspergillus oryzae (strain ATCC 42149 / RIB 40) (Yellow koji mold), this protein is Metacaspase-1A (casA).